We begin with the raw amino-acid sequence, 210 residues long: MADS-box protein AGL42 (210 aa).

The MADS-box domain occupies 1–61 (MVRGKIEMKK…GRLYEFSSSD (61 aa)). Positions 87–177 (LQQLKQEASH…HQKNVINPWR (91 aa)) constitute a K-box domain.

In terms of tissue distribution, expressed in quiescent center (QC) cells of root tips. Expressed at the base of the petiole of cotyledons and leaves, in flower buds, petals, sepals and abscission zone of flowers and siliques.

Its subcellular location is the nucleus. In terms of biological role, MADS-box transcription factor that acts with AGL71 and AGL72 in the control of flowering time. Promotes flowering at the shoot apical and axillary meristems. Seems to act through a gibberellin-dependent pathway. Interacts genetically with SOC1 and its expression is directly regulated by SOC1. Plays a role in controlling flower organ senescence and abscission by repressing ethylene responses and regulating the expression of BOP2 and IDA. This chain is MADS-box protein AGL42 (AGL42), found in Arabidopsis thaliana (Mouse-ear cress).